A 158-amino-acid chain; its full sequence is Ribonuclease H (158 aa).

The region spanning 1–142 is the RNase H type-1 domain; that stretch reads MRKQVEIFTD…CDELARAAAM (142 aa). 4 residues coordinate Mg(2+): Asp10, Glu48, Asp70, and Asp134.

It belongs to the RNase H family. Monomer. Mg(2+) serves as cofactor.

It is found in the cytoplasm. It carries out the reaction Endonucleolytic cleavage to 5'-phosphomonoester.. In terms of biological role, endonuclease that specifically degrades the RNA of RNA-DNA hybrids. In Cronobacter sakazakii (strain ATCC BAA-894) (Enterobacter sakazakii), this protein is Ribonuclease H.